The sequence spans 189 residues: HGPRTase-like protein (189 aa).

This sequence belongs to the purine/pyrimidine phosphoribosyltransferase family. Archaeal HPRT subfamily.

Its function is as follows. May catalyze a purine salvage reaction, the substrate is unknown. This is HGPRTase-like protein from Halorubrum lacusprofundi (strain ATCC 49239 / DSM 5036 / JCM 8891 / ACAM 34).